The following is a 217-amino-acid chain: Elongation factor Ts (217 aa).

An involved in Mg(2+) ion dislocation from EF-Tu region spans residues 82–85; the sequence is TDFV.

The protein belongs to the EF-Ts family.

Its subcellular location is the cytoplasm. Its function is as follows. Associates with the EF-Tu.GDP complex and induces the exchange of GDP to GTP. It remains bound to the aminoacyl-tRNA.EF-Tu.GTP complex up to the GTP hydrolysis stage on the ribosome. This chain is Elongation factor Ts, found in Desulforamulus reducens (strain ATCC BAA-1160 / DSM 100696 / MI-1) (Desulfotomaculum reducens).